The primary structure comprises 160 residues: Phosphopantetheine adenylyltransferase (160 aa).

S9 lines the substrate pocket. ATP contacts are provided by residues 9 to 10 and H17; that span reads SF. The substrate site is built by K41, T73, and R87. Residues 88–90, E98, and 123–129 contribute to the ATP site; these read GMR and YTFFSSS.

It belongs to the bacterial CoaD family. In terms of assembly, homohexamer. The cofactor is Mg(2+).

It is found in the cytoplasm. The catalysed reaction is (R)-4'-phosphopantetheine + ATP + H(+) = 3'-dephospho-CoA + diphosphate. It participates in cofactor biosynthesis; coenzyme A biosynthesis; CoA from (R)-pantothenate: step 4/5. Functionally, reversibly transfers an adenylyl group from ATP to 4'-phosphopantetheine, yielding dephospho-CoA (dPCoA) and pyrophosphate. The protein is Phosphopantetheine adenylyltransferase of Roseiflexus castenholzii (strain DSM 13941 / HLO8).